Here is a 294-residue protein sequence, read N- to C-terminus: Cytidine deaminase (294 aa).

CMP/dCMP-type deaminase domains follow at residues 48–168 (DEDA…FGPK) and 186–294 (VSGD…VLLG). 89-91 (NME) contributes to the substrate binding site. H102 lines the Zn(2+) pocket. Catalysis depends on E104, which acts as the Proton donor. 2 residues coordinate Zn(2+): C129 and C132.

This sequence belongs to the cytidine and deoxycytidylate deaminase family. As to quaternary structure, homodimer. Zn(2+) serves as cofactor.

The catalysed reaction is cytidine + H2O + H(+) = uridine + NH4(+). The enzyme catalyses 2'-deoxycytidine + H2O + H(+) = 2'-deoxyuridine + NH4(+). This enzyme scavenges exogenous and endogenous cytidine and 2'-deoxycytidine for UMP synthesis. The sequence is that of Cytidine deaminase from Klebsiella pneumoniae (strain 342).